Reading from the N-terminus, the 432-residue chain is Acyl-CoA dehydrogenase AFT10-1 (432 aa).

This sequence belongs to the acyl-CoA dehydrogenase family. Requires FAD as cofactor.

The protein operates within mycotoxin biosynthesis. Functionally, acyl-CoA dehydrogenase; part of the gene clusters that mediate the biosynthesis of the host-selective toxins (HSTs) AF-toxins responsible for Alternaria black spot of strawberry disease by the strawberry pathotype. AF-toxin I and III are valine derivatives of 2,3-dyhydroxy-isovaleric acid and 2-hydroxy-isovaleric acid respectively, while AF II is an isoleucine derivative of 2-hydroxy-valeric acid. These derivatives are bound to a 9,10-epoxy-8-hydroxy-9-methyl-decatrienoic acid (EDA) moiety. On cellular level, AF-toxins affect plasma membrane of susceptible cells and cause a sudden increase in loss of K(+) after a few minutes of toxin treatment. The aldo-keto reductase AFTS1 catalyzes the conversion of 2-keto-isovaleric acid (2-KIV) to 2-hydroxy-isovaleric acid (2-HIV) by reduction of its ketone to an alcohol. The acyl-CoA ligase AFT1, the hydrolase AFT2 and the enoyl-CoA hydratases AFT3 and AFT6, but also the polyketide synthase AFT9, the acyl-CoA dehydrogenase AFT10, the cytochrome P450 monooxygenase AFT11 and the oxidoreductase AFT12 are all involved in the biosynthesis of the AK-, AF- and ACT-toxin common EDA structural moiety. The exact function of each enzyme, and of additional enzymes identified within the AF-toxin clusters have still to be determined. This chain is Acyl-CoA dehydrogenase AFT10-1, found in Alternaria alternata (Alternaria rot fungus).